Reading from the N-terminus, the 555-residue chain is Arginine--tRNA ligase (555 aa).

Positions 117–127 match the 'HIGH' region motif; the sequence is ANPNGPLHVGH.

Belongs to the class-I aminoacyl-tRNA synthetase family.

The protein resides in the cytoplasm. The enzyme catalyses tRNA(Arg) + L-arginine + ATP = L-arginyl-tRNA(Arg) + AMP + diphosphate. The sequence is that of Arginine--tRNA ligase from Methanospirillum hungatei JF-1 (strain ATCC 27890 / DSM 864 / NBRC 100397 / JF-1).